Here is a 356-residue protein sequence, read N- to C-terminus: Anthranilate phosphoribosyltransferase (356 aa).

Residues glycine 96, 99–100 (GD), threonine 104, 106–109 (NIST), 124–132 (KHGNRSASG), and serine 136 each bind 5-phospho-alpha-D-ribose 1-diphosphate. Residue glycine 96 coordinates anthranilate. Serine 108 contacts Mg(2+). Residue asparagine 127 participates in anthranilate binding. Arginine 182 contacts anthranilate. 2 residues coordinate Mg(2+): aspartate 241 and glutamate 242.

It belongs to the anthranilate phosphoribosyltransferase family. Homodimer. Requires Mg(2+) as cofactor.

The enzyme catalyses N-(5-phospho-beta-D-ribosyl)anthranilate + diphosphate = 5-phospho-alpha-D-ribose 1-diphosphate + anthranilate. The protein operates within amino-acid biosynthesis; L-tryptophan biosynthesis; L-tryptophan from chorismate: step 2/5. Functionally, catalyzes the transfer of the phosphoribosyl group of 5-phosphorylribose-1-pyrophosphate (PRPP) to anthranilate to yield N-(5'-phosphoribosyl)-anthranilate (PRA). This is Anthranilate phosphoribosyltransferase from Trichodesmium erythraeum (strain IMS101).